A 415-amino-acid chain; its full sequence is Plant UBX domain-containing protein 16 (415 aa).

The UBA domain occupies 19–69 (QLDEEIVLFRQDQLISSFLEIAVDQTAETARILLQTTDWNIDQAVNLFLTN). The region spanning 333-413 (DRSVVCSLCV…GLANSLISVT (81 aa)) is the UBX domain.

This Arabidopsis thaliana (Mouse-ear cress) protein is Plant UBX domain-containing protein 16.